The primary structure comprises 337 residues: Inositol 2-dehydrogenase (337 aa).

This sequence belongs to the Gfo/Idh/MocA family. As to quaternary structure, homotetramer.

The catalysed reaction is myo-inositol + NAD(+) = scyllo-inosose + NADH + H(+). Functionally, involved in the oxidation of myo-inositol (MI) to 2-keto-myo-inositol (2KMI or 2-inosose). The protein is Inositol 2-dehydrogenase of Burkholderia ambifaria (strain MC40-6).